The chain runs to 500 residues: NAD(P)H-quinone oxidoreductase chain 4, chloroplastic (500 aa).

Helical transmembrane passes span 4–24 (FPWL…LFFL), 31–51 (LIKW…TYAF), 87–107 (IGPI…AWPV), 113–130 (LFHF…GSFS), 134–154 (LLLF…LLSM), 167–187 (FILY…GLGL), 208–228 (ALEI…SPII), 242–262 (HYST…YGLV), 272–292 (AHSI…IYAA), 305–325 (IAYS…SITD), 330–350 (GAIL…FLAG), 386–406 (LALP…GIIT), 416–436 (ILIT…SLSM), and 462–482 (LFVS…PDFV).

This sequence belongs to the complex I subunit 4 family.

Its subcellular location is the plastid. The protein resides in the chloroplast thylakoid membrane. The enzyme catalyses a plastoquinone + NADH + (n+1) H(+)(in) = a plastoquinol + NAD(+) + n H(+)(out). It carries out the reaction a plastoquinone + NADPH + (n+1) H(+)(in) = a plastoquinol + NADP(+) + n H(+)(out). The polypeptide is NAD(P)H-quinone oxidoreductase chain 4, chloroplastic (Gossypium barbadense (Sea Island cotton)).